We begin with the raw amino-acid sequence, 171 residues long: Neuronal vesicle trafficking-associated protein 2 (171 aa).

The interval 1–21 (MVKLNSNPGEKGAKPPSVEDG) is disordered. The Cytoplasmic portion of the chain corresponds to 1 to 71 (MVKLNSNPGE…FRVPKIAEFT (71 aa)). A helical; Signal-anchor for type II membrane protein membrane pass occupies residues 72-92 (VTILVSLALAFLACIVFLVVY). At 93–171 (KAFTYDHSCP…EPKPPKTQGH (79 aa)) the chain is on the lumenal side.

Belongs to the NSG family. As to expression, specifically expressed in neural and neuroendocrine tissues. Pituitary and less in adrenal gland and testis. Expressed in the hippocampus throughout development. Remains enriched in layer V cortical neurons during development. At P0, broadly expressed in the neocortex. Is down-regulated overall at P8 and P14, but remains relatively enriched in layer V. At P0 is lower expressed in the cerebellum. Expression remains low throughout development, and is undetectable by adulthood.

It localises to the membrane. The protein localises to the golgi apparatus. Its subcellular location is the trans-Golgi network membrane. The protein resides in the cell projection. It is found in the dendrite. It localises to the endosome membrane. The protein localises to the early endosome membrane. Its subcellular location is the late endosome membrane. The protein resides in the lysosome lumen. It is found in the cytoplasmic vesicle membrane. It localises to the golgi stack membrane. The protein localises to the endosome. Its subcellular location is the multivesicular body membrane. The chain is Neuronal vesicle trafficking-associated protein 2 from Mus musculus (Mouse).